Reading from the N-terminus, the 209-residue chain is Uracil phosphoribosyltransferase (209 aa).

5-phospho-alpha-D-ribose 1-diphosphate-binding positions include Arg79, Arg104, and 131-139 (DPMLATGGS). Residues Ile194 and 199 to 201 (GDA) contribute to the uracil site. Asp200 is a 5-phospho-alpha-D-ribose 1-diphosphate binding site.

This sequence belongs to the UPRTase family. Mg(2+) serves as cofactor.

It carries out the reaction UMP + diphosphate = 5-phospho-alpha-D-ribose 1-diphosphate + uracil. Its pathway is pyrimidine metabolism; UMP biosynthesis via salvage pathway; UMP from uracil: step 1/1. Its activity is regulated as follows. Allosterically activated by GTP. Functionally, catalyzes the conversion of uracil and 5-phospho-alpha-D-ribose 1-diphosphate (PRPP) to UMP and diphosphate. The sequence is that of Uracil phosphoribosyltransferase from Lacticaseibacillus paracasei (strain ATCC 334 / BCRC 17002 / CCUG 31169 / CIP 107868 / KCTC 3260 / NRRL B-441) (Lactobacillus paracasei).